Consider the following 436-residue polypeptide: UPF0597 protein YhaM (436 aa).

It belongs to the UPF0597 family.

The polypeptide is UPF0597 protein YhaM (Escherichia coli O6:H1 (strain CFT073 / ATCC 700928 / UPEC)).